Consider the following 261-residue polypeptide: uncharacterized protein (261 aa).

A disordered region spans residues 1 to 22; that stretch reads MGVADNEYISVPTGEPVQQQPQ. 3 helical membrane-spanning segments follow: residues 92–112, 122–142, and 147–167; these read IIILFFSQQFLLFSIAPILGL, IVVMHFLTAAFYYIFSVIFLF, and INTILLSILFSIIFTLSLMNY.

It is found in the membrane. This is an uncharacterized protein from Dictyostelium discoideum (Social amoeba).